We begin with the raw amino-acid sequence, 509 residues long: ATP synthase subunit alpha (509 aa).

169–176 provides a ligand contact to ATP; that stretch reads GDRQTGKT.

Belongs to the ATPase alpha/beta chains family. F-type ATPases have 2 components, CF(1) - the catalytic core - and CF(0) - the membrane proton channel. CF(1) has five subunits: alpha(3), beta(3), gamma(1), delta(1), epsilon(1). CF(0) has three main subunits: a(1), b(2) and c(9-12). The alpha and beta chains form an alternating ring which encloses part of the gamma chain. CF(1) is attached to CF(0) by a central stalk formed by the gamma and epsilon chains, while a peripheral stalk is formed by the delta and b chains.

The protein resides in the cell inner membrane. It catalyses the reaction ATP + H2O + 4 H(+)(in) = ADP + phosphate + 5 H(+)(out). Functionally, produces ATP from ADP in the presence of a proton gradient across the membrane. The alpha chain is a regulatory subunit. The sequence is that of ATP synthase subunit alpha from Mesorhizobium japonicum (strain LMG 29417 / CECT 9101 / MAFF 303099) (Mesorhizobium loti (strain MAFF 303099)).